An 833-amino-acid polypeptide reads, in one-letter code: MAFRATPGRTPPGPGPRSGIPSASFPSPQPPMAGPGGIEEEDEEEPAEIHLCVLWSSGYLGIAYYDTSDSTIHFMPDAPDHESLKLLQRVLDEINPQSVVTSAKQDEAMTRFLGKLASEEHREPKGPEIILLPSVDFGPEISKQRLLSGNYSFISDSMTATEKILFLSSIIPFDCVLTVRALGGLLKFLSRRRIGVELEDYDVGVPILGFKKFVLTHLVSIDQDTYSVLQIFKSESHPSVYKVASGLKEGLSLFGILNRCRCKWGQKLLRLWFTRPTRELRELNSRLDVIQFFLMPQNLDMAQMLHRLLSHIKNVPLILKRMKLSHTKVSDWQVLYKTVYSALGLRDACRSLPQSIQLFQDIAQEFSDDLHHIASLIGKVVDFEESLAENRFTVLPNIDPDIDAKKRRLIGLPSFLTEVAQKELENLDSRIPSCSVIYIPLIGFLLSIPRLPFMVEASDFEIEGLDFMFLSEDKLHYRSARTKELDTLLGDLHCEIRDQETLLMYQLQCQVLARASVLTRVLDLASRLDVLLALASAARDYGYSRPHYSPCIHGVRIRNGRHPLMELCARTFVPNSTDCGGDQGRVKVITGPNSSGKSIYLKQVGLITFMALVGSFVPAEEAEIGVIDAIFTRIHSCESISLGLSTFMIDLNQVAKAVNNATEHSLVLIDEFGKGTNSVDGLALLAAVLRHWLALGPSCPHVFVATNFLSLVQLQLLPQGPLVQYLTMETCEDGEDLVFFYQLCQGVASASHASHTAAQAGLPDPLIARGKEVSDLIRSGKPIKATNELLRRNQMENCQALVDKFLKLDLEDPTLDLDIFISQEVLPAAPTIL.

Residues 1–45 (MAFRATPGRTPPGPGPRSGIPSASFPSPQPPMAGPGGIEEEDEEE) form a disordered region. ATP is bound at residue 591–598 (GPNSSGKS).

This sequence belongs to the DNA mismatch repair MutS family. As to quaternary structure, heterooligomer of MSH4 and MSH5. Interacts with HJURP. Interacts with REDIC1.

In terms of biological role, involved in DNA mismatch repair and meiotic recombination processes. Facilitates crossovers between homologs during meiosis. The chain is MutS protein homolog 5 (Msh5) from Mus musculus (Mouse).